The sequence spans 538 residues: Eukaryotic translation initiation factor 3 subunit L (538 aa).

One can recognise a PCI domain in the interval 305–513 (TFSDILLYIQ…IHIADTKVSH (209 aa)).

Belongs to the eIF-3 subunit L family. Component of the eukaryotic translation initiation factor 3 (eIF-3) complex. The eIF-3 complex interacts with pix.

It is found in the cytoplasm. Component of the eukaryotic translation initiation factor 3 (eIF-3) complex, which is involved in protein synthesis of a specialized repertoire of mRNAs and, together with other initiation factors, stimulates binding of mRNA and methionyl-tRNAi to the 40S ribosome. The eIF-3 complex specifically targets and initiates translation of a subset of mRNAs involved in cell proliferation. The chain is Eukaryotic translation initiation factor 3 subunit L from Drosophila virilis (Fruit fly).